We begin with the raw amino-acid sequence, 438 residues long: Methylenetetrahydrofolate--tRNA-(uracil-5-)-methyltransferase TrmFO (438 aa).

7–12 (GAGLAG) lines the FAD pocket.

The protein belongs to the MnmG family. TrmFO subfamily. Requires FAD as cofactor.

It localises to the cytoplasm. The catalysed reaction is uridine(54) in tRNA + (6R)-5,10-methylene-5,6,7,8-tetrahydrofolate + NADH + H(+) = 5-methyluridine(54) in tRNA + (6S)-5,6,7,8-tetrahydrofolate + NAD(+). It catalyses the reaction uridine(54) in tRNA + (6R)-5,10-methylene-5,6,7,8-tetrahydrofolate + NADPH + H(+) = 5-methyluridine(54) in tRNA + (6S)-5,6,7,8-tetrahydrofolate + NADP(+). Catalyzes the folate-dependent formation of 5-methyl-uridine at position 54 (M-5-U54) in all tRNAs. The chain is Methylenetetrahydrofolate--tRNA-(uracil-5-)-methyltransferase TrmFO from Sulfurihydrogenibium sp. (strain YO3AOP1).